A 290-amino-acid polypeptide reads, in one-letter code: ATP synthase gamma chain (290 aa).

The protein belongs to the ATPase gamma chain family. As to quaternary structure, F-type ATPases have 2 components, CF(1) - the catalytic core - and CF(0) - the membrane proton channel. CF(1) has five subunits: alpha(3), beta(3), gamma(1), delta(1), epsilon(1). CF(0) has three main subunits: a, b and c.

It is found in the cell inner membrane. Its function is as follows. Produces ATP from ADP in the presence of a proton gradient across the membrane. The gamma chain is believed to be important in regulating ATPase activity and the flow of protons through the CF(0) complex. The sequence is that of ATP synthase gamma chain from Amoebophilus asiaticus (strain 5a2).